Consider the following 280-residue polypeptide: MAIRKYKPTTPGRRGASVSDFAEITRSTPEKSLVRPLHGRGGRNAHGRITTRHKGGGHKRAYRMIDFRRNDKDGVNAKVAHIEYDPNRTARIALLHYLDGEKRYIIAPNGLSQGDVVESGANADIKPGNNLPLRNIPAGTLIHAVELRPGGGAKLARSAGSSIQLLGKEASYASLRMPSGEIRRVDVRCRATVGEVGNAEQANINWGKAGRMRWKGKRPSVRGVVMNPVDHPHGGGEGKTSGGRHPVSPWGKPEGRTRNANKSSNKFIVRRRRTGKKHSR.

2 disordered regions span residues 27–59 (STPEKSLVRPLHGRGGRNAHGRITTRHKGGGHK) and 225–280 (VMNP…KHSR). 2 stretches are compositionally biased toward basic residues: residues 37-59 (LHGRGGRNAHGRITTRHKGGGHK) and 268-280 (IVRRRRTGKKHSR).

The protein belongs to the universal ribosomal protein uL2 family. Part of the 50S ribosomal subunit. Forms a bridge to the 30S subunit in the 70S ribosome.

One of the primary rRNA binding proteins. Required for association of the 30S and 50S subunits to form the 70S ribosome, for tRNA binding and peptide bond formation. It has been suggested to have peptidyltransferase activity; this is somewhat controversial. Makes several contacts with the 16S rRNA in the 70S ribosome. In Mycobacterium bovis (strain ATCC BAA-935 / AF2122/97), this protein is Large ribosomal subunit protein uL2.